An 88-amino-acid chain; its full sequence is Small ribosomal subunit protein bS20 (88 aa).

This sequence belongs to the bacterial ribosomal protein bS20 family.

Functionally, binds directly to 16S ribosomal RNA. This is Small ribosomal subunit protein bS20 from Methylorubrum populi (strain ATCC BAA-705 / NCIMB 13946 / BJ001) (Methylobacterium populi).